A 274-amino-acid chain; its full sequence is MQFSKMHGLGNDFVVVDGVTQNVFFTPETIRRLANRHCGIGFDQLLIVEAPYDPELDFHYRIFNADGSEVSQCGNGARCFARFVTLKGLTNKKDISVSTQKGNMVLTVKDDNQIRVNMGEPIWEPAKIPFTANKFEKNYILRTDIQTVLCGAVSMGNPHCVVQVDDIQTANVEQLGPLLESHERFPERVNAGFMQIINKEHIKLRVYERGAGETQACGSGACAAVAVGIMQGLLNNNVQVDLPGGSLMIEWNGVGHPLYMTGEATHIYDGFITL.

3 residues coordinate substrate: Asn-11, Gln-44, and Asn-64. The Proton donor role is filled by Cys-73. Substrate contacts are provided by residues 74–75, Asn-157, Asn-190, and 208–209; these read GN and ER. Cys-217 (proton acceptor) is an active-site residue. Substrate is bound at residue 218–219; sequence GS.

Belongs to the diaminopimelate epimerase family. As to quaternary structure, homodimer (Potential). Previously DapF has been proposed to be a monomer, however it seems that it adopts a dimeric structure.

It is found in the cytoplasm. It carries out the reaction (2S,6S)-2,6-diaminopimelate = meso-2,6-diaminopimelate. The protein operates within amino-acid biosynthesis; L-lysine biosynthesis via DAP pathway; DL-2,6-diaminopimelate from LL-2,6-diaminopimelate: step 1/1. Inhibited by LL-aziridino (LL-AziDAP), DL-aziridino (DL-AziDAP). Also inhibited by (2S,3R,6S)-2,6-diamino-3-fluoropimelate (L,L-3-fluoro-DAP) and (2R,3S,6S)-2,6-diamino-3-fluoropimelate (D,L-3-fluoro-DAP). Its function is as follows. Catalyzes the stereoinversion of LL-2,6-diaminopimelate (L,L-DAP) to meso-diaminopimelate (meso-DAP), a precursor of L-lysine and an essential component of the bacterial peptidoglycan. Only accepts DAP isomers with the L configuration. In Haemophilus influenzae (strain ATCC 51907 / DSM 11121 / KW20 / Rd), this protein is Diaminopimelate epimerase.